The sequence spans 59 residues: Protein HOR7 (59 aa).

A signal peptide spans 1–19 (MKLSQVVVSAVAFTGLVSA).

This sequence to yeast DDR2.

The chain is Protein HOR7 (HOR7) from Saccharomyces cerevisiae (strain ATCC 204508 / S288c) (Baker's yeast).